The chain runs to 313 residues: Protein KRE1 (313 aa).

The N-terminal stretch at 1–26 (MMRRTLLHSFATLLLSLSLWSAAVMA) is a signal peptide. Repeat 1 spans residues 72–86 (TTTNDVGTTVTLTQT). The interval 72–141 (TTTNDVGTTV…LGTTVTLTQT (70 aa)) is 2 X approximate repeats. The tract at residues 94–114 (PTTTTSTSSTGKTTTTVPTAT) is disordered. Repeat 2 spans residues 127 to 141 (TTTNDLGTTVTLTQT). The span at 147-181 (TSATSSASSSVSSSVSSSGSSSSVKTTTSTGSAVA) shows a compositional bias: low complexity. The tract at residues 147 to 198 (TSATSSASSSVSSSVSSSGSSSSVKTTTSTGSAVAETGTRPDPSTDFTEPPV) is disordered. Asparagine 288 carries GPI-anchor amidated asparagine lipidation. A propeptide spans 289–313 (EAQHLGMSSFTSILGGLLTVLIWFL) (removed in mature form).

This sequence belongs to the KRE1 family. Extensively modified; probably through addition of O-linked mannose residues. Post-translationally, the GPI-anchor is attached to the protein in the endoplasmic reticulum and serves to target the protein to the cell surface. There, the glucosamine-inositol phospholipid moiety is cleaved off and the GPI-modified mannoprotein is covalently attached via its lipidless GPI glycan remnant to the 1,6-beta-glucan of the outer cell wall layer.

The protein localises to the cell membrane. The protein resides in the secreted. It localises to the cell wall. Involved in a late stage of cell wall 1,6-beta-glucan synthesis and assembly. Has a structural, rather than enzymic, function within cell wall 1,6-beta-glucan assembly and architecture, possibly by being involved in covalently cross-linking 1,6-beta-glucans to other cell wall components such as 1,3-beta-glucan, chitin and certain mannoproteins. Acts as the plasma membrane receptor for the yeast K1 viral toxin. The protein is Protein KRE1 (KRE1) of Saccharomyces cerevisiae (strain ATCC 204508 / S288c) (Baker's yeast).